Reading from the N-terminus, the 386-residue chain is Alanine racemase (386 aa).

The Proton acceptor; specific for D-alanine role is filled by lysine 38. Position 38 is an N6-(pyridoxal phosphate)lysine (lysine 38). Arginine 136 contacts substrate. Catalysis depends on tyrosine 267, which acts as the Proton acceptor; specific for L-alanine. Methionine 315 lines the substrate pocket.

It belongs to the alanine racemase family. Pyridoxal 5'-phosphate is required as a cofactor.

It catalyses the reaction L-alanine = D-alanine. Its pathway is amino-acid biosynthesis; D-alanine biosynthesis; D-alanine from L-alanine: step 1/1. In terms of biological role, catalyzes the interconversion of L-alanine and D-alanine. May also act on other amino acids. The sequence is that of Alanine racemase (alr) from Clostridium perfringens (strain SM101 / Type A).